A 146-amino-acid polypeptide reads, in one-letter code: uncharacterized protein (146 aa).

One can recognise an N-acetyltransferase domain in the interval 7–146 (LEINYKTDEL…EGHDVLLWKP (140 aa)).

This is an uncharacterized protein from Staphylococcus aureus (strain COL).